A 379-amino-acid polypeptide reads, in one-letter code: Cytochrome b (379 aa).

4 consecutive transmembrane segments (helical) span residues 33–53, 77–98, 113–133, and 178–198; these read FGSL…FLAM, WLIR…FIHV, WNIG…GYVL, and FFAF…VHLL. Heme b contacts are provided by His-83 and His-97. Positions 182 and 196 each coordinate heme b. Residue His-201 coordinates a ubiquinone. 4 helical membrane-spanning segments follow: residues 226 to 246, 288 to 308, 320 to 340, and 347 to 367; these read IKDL…TLFF, LGGV…PLLN, VTQV…WIGG, and FTMI…ILIP.

It belongs to the cytochrome b family. The cytochrome bc1 complex contains 11 subunits: 3 respiratory subunits (MT-CYB, CYC1 and UQCRFS1), 2 core proteins (UQCRC1 and UQCRC2) and 6 low-molecular weight proteins (UQCRH/QCR6, UQCRB/QCR7, UQCRQ/QCR8, UQCR10/QCR9, UQCR11/QCR10 and a cleavage product of UQCRFS1). This cytochrome bc1 complex then forms a dimer. Heme b serves as cofactor.

It is found in the mitochondrion inner membrane. Its function is as follows. Component of the ubiquinol-cytochrome c reductase complex (complex III or cytochrome b-c1 complex) that is part of the mitochondrial respiratory chain. The b-c1 complex mediates electron transfer from ubiquinol to cytochrome c. Contributes to the generation of a proton gradient across the mitochondrial membrane that is then used for ATP synthesis. This Akodon subfuscus (Puno grass mouse) protein is Cytochrome b (MT-CYB).